A 249-amino-acid chain; its full sequence is MSLDQPAHRRPRVAAAVLAGGVGSRMGSAHPKQLLRLAGQTILERSVAALCAAPEVDEVVVVMNAAHLAEAEKILAEGRYDKVSRIVPGGASRSESSLAALQAVDDYDDNDLLLLHDAARPLVSGRTITACVTELTEVGAVGVAVPSSDTVVQVTLDASGREVIAAVPDRAALRRMQTPQGFRLGVIRRAYARAFAEPGFTATDDCGVVLRYLPEEPVRIVTGEESNIKVTHPSDLAVAEALLRTGVAQ.

This sequence belongs to the IspD/TarI cytidylyltransferase family. IspD subfamily.

It catalyses the reaction 2-C-methyl-D-erythritol 4-phosphate + CTP + H(+) = 4-CDP-2-C-methyl-D-erythritol + diphosphate. It participates in isoprenoid biosynthesis; isopentenyl diphosphate biosynthesis via DXP pathway; isopentenyl diphosphate from 1-deoxy-D-xylulose 5-phosphate: step 2/6. Catalyzes the formation of 4-diphosphocytidyl-2-C-methyl-D-erythritol from CTP and 2-C-methyl-D-erythritol 4-phosphate (MEP). This chain is 2-C-methyl-D-erythritol 4-phosphate cytidylyltransferase, found in Thermobifida fusca (strain YX).